A 307-amino-acid chain; its full sequence is Elongation factor Ts (307 aa).

Residues 80–83 are involved in Mg(2+) ion dislocation from EF-Tu; sequence TDFV.

The protein belongs to the EF-Ts family.

The protein resides in the cytoplasm. In terms of biological role, associates with the EF-Tu.GDP complex and induces the exchange of GDP to GTP. It remains bound to the aminoacyl-tRNA.EF-Tu.GTP complex up to the GTP hydrolysis stage on the ribosome. The protein is Elongation factor Ts of Bradyrhizobium diazoefficiens (strain JCM 10833 / BCRC 13528 / IAM 13628 / NBRC 14792 / USDA 110).